The chain runs to 535 residues: uncharacterized protein (535 aa).

2 helical membrane-spanning segments follow: residues 7 to 27 and 509 to 529; these read DFDVVVVGGGHNGLVAAAYLA and GGAVSGIGGHNAAMAVLACLA.

It is found in the cell membrane. This is an uncharacterized protein from Mycobacterium bovis (strain ATCC BAA-935 / AF2122/97).